A 288-amino-acid chain; its full sequence is ATP synthase subunit a (288 aa).

6 helical membrane-spanning segments follow: residues 47–67 (LDSMLWSIGLGIVFCAIFWMV), 104–124 (LIAPLALTIFVWIFLMNLMDL), 157–177 (DPNITLGMSFSVFILILFYSI), 199–219 (PIVQIILIPINFILEFVTLIA), 237–257 (LIFILIALMPFWIQWALSVPW), and 258–278 (AIFHILIITLQAFVFMMLTIV).

Belongs to the ATPase A chain family. In terms of assembly, F-type ATPases have 2 components, CF(1) - the catalytic core - and CF(0) - the membrane proton channel. CF(1) has five subunits: alpha(3), beta(3), gamma(1), delta(1), epsilon(1). CF(0) has three main subunits: a(1), b(2) and c(9-12). The alpha and beta chains form an alternating ring which encloses part of the gamma chain. CF(1) is attached to CF(0) by a central stalk formed by the gamma and epsilon chains, while a peripheral stalk is formed by the delta and b chains.

Its subcellular location is the cell inner membrane. Functionally, key component of the proton channel; it plays a direct role in the translocation of protons across the membrane. This is ATP synthase subunit a from Psychrobacter arcticus (strain DSM 17307 / VKM B-2377 / 273-4).